Here is a 199-residue protein sequence, read N- to C-terminus: dTTP/UTP pyrophosphatase (199 aa).

The active-site Proton acceptor is aspartate 76.

This sequence belongs to the Maf family. YhdE subfamily. It depends on a divalent metal cation as a cofactor.

The protein localises to the cytoplasm. The catalysed reaction is dTTP + H2O = dTMP + diphosphate + H(+). It carries out the reaction UTP + H2O = UMP + diphosphate + H(+). Functionally, nucleoside triphosphate pyrophosphatase that hydrolyzes dTTP and UTP. May have a dual role in cell division arrest and in preventing the incorporation of modified nucleotides into cellular nucleic acids. This chain is dTTP/UTP pyrophosphatase, found in Chlorobaculum parvum (strain DSM 263 / NCIMB 8327) (Chlorobium vibrioforme subsp. thiosulfatophilum).